The sequence spans 305 residues: GMP synthase [glutamine-hydrolyzing] subunit B (305 aa).

The GMPS ATP-PPase domain occupies 2 to 184; that stretch reads VKTEKFIQKS…LGLPPEIQHR (183 aa). 29 to 35 contributes to the ATP binding site; sequence SGGVDSS.

In terms of assembly, heterodimer composed of a glutamine amidotransferase subunit (A) and a GMP-binding subunit (B).

It carries out the reaction XMP + L-glutamine + ATP + H2O = GMP + L-glutamate + AMP + diphosphate + 2 H(+). It functions in the pathway purine metabolism; GMP biosynthesis; GMP from XMP (L-Gln route): step 1/1. Functionally, catalyzes the synthesis of GMP from XMP. In Methanoregula boonei (strain DSM 21154 / JCM 14090 / 6A8), this protein is GMP synthase [glutamine-hydrolyzing] subunit B.